Here is an 84-residue protein sequence, read N- to C-terminus: Cell division topological specificity factor (84 aa).

The protein belongs to the MinE family.

In terms of biological role, prevents the cell division inhibition by proteins MinC and MinD at internal division sites while permitting inhibition at polar sites. This ensures cell division at the proper site by restricting the formation of a division septum at the midpoint of the long axis of the cell. The chain is Cell division topological specificity factor from Paraburkholderia phytofirmans (strain DSM 17436 / LMG 22146 / PsJN) (Burkholderia phytofirmans).